The following is a 503-amino-acid chain: Cytochrome P450 3A14 (503 aa).

Position 442 (Cys442) interacts with heme.

The protein belongs to the cytochrome P450 family. It depends on heme as a cofactor.

It localises to the endoplasmic reticulum membrane. Its subcellular location is the microsome membrane. The enzyme catalyses an organic molecule + reduced [NADPH--hemoprotein reductase] + O2 = an alcohol + oxidized [NADPH--hemoprotein reductase] + H2O + H(+). In terms of biological role, cytochromes P450 are a group of heme-thiolate monooxygenases. In liver microsomes, this enzyme is involved in an NADPH-dependent electron transport pathway. It oxidizes a variety of structurally unrelated compounds, including steroids, fatty acids, and xenobiotics. This Cavia porcellus (Guinea pig) protein is Cytochrome P450 3A14 (CYP3A14).